The following is a 332-amino-acid chain: UPF0158 protein TC_0713 (332 aa).

Disordered stretches follow at residues 196–215 (ALNP…KVEA) and 291–332 (LGYD…KARS). Residues 295–316 (GDGDASDFFGEEYDDDDDDDDD) show a composition bias toward acidic residues. Positions 320 to 332 (KKAAKRGRKKARS) are enriched in basic residues.

The protein belongs to the UPF0158 family.

The sequence is that of UPF0158 protein TC_0713 from Chlamydia muridarum (strain MoPn / Nigg).